The sequence spans 207 residues: Sodium/potassium-transporting ATPase subunit beta-1-interacting protein 1 (207 aa).

Helical transmembrane passes span 2 to 22, 35 to 55, and 62 to 82; these read GRCS…AAAL, APIL…LGTL, and LILY…IICF. Residue asparagine 100 is glycosylated (N-linked (GlcNAc...) asparagine). A helical transmembrane segment spans residues 147 to 167; the sequence is ALSSALQIFLALFGFVYACYV.

This sequence belongs to the NKAIN family. Interacts with atp1b1 C-terminus.

It is found in the cell membrane. This Xenopus tropicalis (Western clawed frog) protein is Sodium/potassium-transporting ATPase subunit beta-1-interacting protein 1 (nkain1).